We begin with the raw amino-acid sequence, 1342 residues long: DNA-directed RNA polymerase subunit beta (1342 aa).

This sequence belongs to the RNA polymerase beta chain family. In terms of assembly, the RNAP catalytic core consists of 2 alpha, 1 beta, 1 beta' and 1 omega subunit. When a sigma factor is associated with the core the holoenzyme is formed, which can initiate transcription.

The catalysed reaction is RNA(n) + a ribonucleoside 5'-triphosphate = RNA(n+1) + diphosphate. Its function is as follows. DNA-dependent RNA polymerase catalyzes the transcription of DNA into RNA using the four ribonucleoside triphosphates as substrates. This is DNA-directed RNA polymerase subunit beta from Yersinia pestis bv. Antiqua (strain Angola).